We begin with the raw amino-acid sequence, 516 residues long: MTNVSIIVLDFGSQYTQLIARRLREDKIYCEILPYHTKVADIKAKNPQGIILSGGPSSVYNKDAYEVDQGVYKMDIPVLGICYGMQRIAADFGGSVVRASHHEYGKAELKILNLETNPSPLFKDCDDERIVWMSHSDKVDTLPAGFEPIAVSSNSPYAAIANEEKRIYAMQYHPEVQHSEEGYLMLRNFARNICGVTEKWKMEHFLKEQIKNIRAKVGSGKVLCGLSGGVDSSVVAAMLYEAIGDQLVPVFVDNGLLRKGEREQVEEVFKINLKVPLVVVDARENFLSKLAGVSDPEKKRKIIGHTFIEEFEKEAKKHDGIKFLAQGTLYPDVIESISVNGPSEVIKSHHNVGGLPDWMDFELIEPLRELFKDEVRKIGLELGLPESMINRHPFPGPGLAIRIMGDVNEADLTLLREADVILLDELKASGYYAKTWQAFVVLLNVKSVGVMGDNRTYDNTVCVRVVEAVDGMTATFAHLPHDLLERISRRIINEVDGINRVVYDISSKPPATIEWE.

In terms of domain architecture, Glutamine amidotransferase type-1 spans 5–199 (SIIVLDFGSQ…ARNICGVTEK (195 aa)). The active-site Nucleophile is cysteine 82. Catalysis depends on residues histidine 173 and glutamate 175. The 192-residue stretch at 200 to 391 (WKMEHFLKEQ…LGLPESMINR (192 aa)) folds into the GMPS ATP-PPase domain. Position 227 to 233 (227 to 233 (SGGVDSS)) interacts with ATP.

In terms of assembly, homodimer.

The catalysed reaction is XMP + L-glutamine + ATP + H2O = GMP + L-glutamate + AMP + diphosphate + 2 H(+). It functions in the pathway purine metabolism; GMP biosynthesis; GMP from XMP (L-Gln route): step 1/1. Functionally, catalyzes the synthesis of GMP from XMP. The protein is GMP synthase [glutamine-hydrolyzing] of Sulfurimonas denitrificans (strain ATCC 33889 / DSM 1251) (Thiomicrospira denitrificans (strain ATCC 33889 / DSM 1251)).